The chain runs to 396 residues: Tyrosine--tRNA ligase (396 aa).

Positions 43-52 (PSSPDIHLGH) match the 'HIGH' region motif. The short motif at 227 to 231 (KMSKS) is the 'KMSKS' region element. Residue lysine 230 coordinates ATP. In terms of domain architecture, S4 RNA-binding spans 338 to 396 (TGVIDFIILSGLAKSKSEARRLLEQGAVEINSEKISDQNTPVKCGDIIKAGKRRYSKAI).

The protein belongs to the class-I aminoacyl-tRNA synthetase family. TyrS type 2 subfamily. In terms of assembly, homodimer.

The protein resides in the cytoplasm. The enzyme catalyses tRNA(Tyr) + L-tyrosine + ATP = L-tyrosyl-tRNA(Tyr) + AMP + diphosphate + H(+). In terms of biological role, catalyzes the attachment of tyrosine to tRNA(Tyr) in a two-step reaction: tyrosine is first activated by ATP to form Tyr-AMP and then transferred to the acceptor end of tRNA(Tyr). The chain is Tyrosine--tRNA ligase from Dehalococcoides mccartyi (strain CBDB1).